The following is a 146-amino-acid chain: VHWTAEEKQLITGLWGKVNVADCGAEALARLLIVYPWTQRFFASFGNLSSPTAIIGNPMVRAHGKKVLTSFGEAVKNLDNIKNTFAQLSELHCDKLHVDPENFRLLGDILIIVLAAHFTKDFSPDCQAAWQKLVRAVAHALARKYH.

In terms of domain architecture, Globin spans 2–146; it reads HWTAEEKQLI…VAHALARKYH (145 aa). Histidine 63 and histidine 92 together coordinate heme b.

This sequence belongs to the globin family. In terms of assembly, heterotetramer of two alpha chains and two beta chains. In terms of tissue distribution, red blood cells.

Functionally, involved in oxygen transport from the lung to the various peripheral tissues. This chain is Hemoglobin subunit beta (HBB), found in Aquila chrysaetos (Golden eagle).